The following is a 201-amino-acid chain: 3-isopropylmalate dehydratase small subunit (201 aa).

This sequence belongs to the LeuD family. LeuD type 1 subfamily. In terms of assembly, heterodimer of LeuC and LeuD.

The enzyme catalyses (2R,3S)-3-isopropylmalate = (2S)-2-isopropylmalate. The protein operates within amino-acid biosynthesis; L-leucine biosynthesis; L-leucine from 3-methyl-2-oxobutanoate: step 2/4. Its function is as follows. Catalyzes the isomerization between 2-isopropylmalate and 3-isopropylmalate, via the formation of 2-isopropylmaleate. The protein is 3-isopropylmalate dehydratase small subunit of Shewanella piezotolerans (strain WP3 / JCM 13877).